We begin with the raw amino-acid sequence, 248 residues long: Ubiquinone biosynthesis O-methyltransferase (248 aa).

4 residues coordinate S-adenosyl-L-methionine: R41, G72, D93, and M136.

It belongs to the methyltransferase superfamily. UbiG/COQ3 family.

The catalysed reaction is a 3-demethylubiquinol + S-adenosyl-L-methionine = a ubiquinol + S-adenosyl-L-homocysteine + H(+). The enzyme catalyses a 3-(all-trans-polyprenyl)benzene-1,2-diol + S-adenosyl-L-methionine = a 2-methoxy-6-(all-trans-polyprenyl)phenol + S-adenosyl-L-homocysteine + H(+). It functions in the pathway cofactor biosynthesis; ubiquinone biosynthesis. In terms of biological role, O-methyltransferase that catalyzes the 2 O-methylation steps in the ubiquinone biosynthetic pathway. The chain is Ubiquinone biosynthesis O-methyltransferase from Bartonella bacilliformis (strain ATCC 35685 / KC583 / Herrer 020/F12,63).